We begin with the raw amino-acid sequence, 204 residues long: N-(5'-phosphoribosyl)anthranilate isomerase (204 aa).

The protein belongs to the TrpF family.

The catalysed reaction is N-(5-phospho-beta-D-ribosyl)anthranilate = 1-(2-carboxyphenylamino)-1-deoxy-D-ribulose 5-phosphate. It functions in the pathway amino-acid biosynthesis; L-tryptophan biosynthesis; L-tryptophan from chorismate: step 3/5. This Syntrophomonas wolfei subsp. wolfei (strain DSM 2245B / Goettingen) protein is N-(5'-phosphoribosyl)anthranilate isomerase.